Here is a 120-residue protein sequence, read N- to C-terminus: Ribonuclease P protein component (120 aa).

This sequence belongs to the RnpA family. Consists of a catalytic RNA component (M1 or rnpB) and a protein subunit.

The enzyme catalyses Endonucleolytic cleavage of RNA, removing 5'-extranucleotides from tRNA precursor.. Functionally, RNaseP catalyzes the removal of the 5'-leader sequence from pre-tRNA to produce the mature 5'-terminus. It can also cleave other RNA substrates such as 4.5S RNA. The protein component plays an auxiliary but essential role in vivo by binding to the 5'-leader sequence and broadening the substrate specificity of the ribozyme. This is Ribonuclease P protein component from Rickettsia bellii (strain RML369-C).